The sequence spans 691 residues: Probable serine/threonine-protein kinase pXi (691 aa).

A Protein kinase domain is found at tyrosine 18–isoleucine 263. ATP is bound by residues isoleucine 24–valine 32 and lysine 47. Catalysis depends on aspartate 137, which acts as the Proton acceptor. Disordered regions lie at residues threonine 314–asparagine 350, glutamate 420–serine 447, glutamine 510–threonine 536, and glycine 600–lysine 620. Residues asparagine 322–asparagine 336 are compositionally biased toward low complexity. A compositionally biased stretch (basic and acidic residues) spans isoleucine 338 to asparagine 350. 3 stretches are compositionally biased toward low complexity: residues serine 423–serine 433, asparagine 512–threonine 536, and glycine 600–serine 615. A coiled-coil region spans residues proline 642–lysine 691.

The protein belongs to the protein kinase superfamily. CAMK Ser/Thr protein kinase family.

It catalyses the reaction L-seryl-[protein] + ATP = O-phospho-L-seryl-[protein] + ADP + H(+). It carries out the reaction L-threonyl-[protein] + ATP = O-phospho-L-threonyl-[protein] + ADP + H(+). This chain is Probable serine/threonine-protein kinase pXi (pXi), found in Dictyostelium discoideum (Social amoeba).